The sequence spans 409 residues: MRGGQGAARAPVIQFTNCRILRGGALLREDLWVRGGRILDPEKLFFEERRVADEQRDCGGCILAPGFIDVQINGGFGVDFSQASEDVGSGVALVARRILSHGVTSFCPTLVTSPLEVYHKVLPQIPVKSGGPHGAGVLGVHLEGPFISREKRGAHPEAHLRSFEADAFQDVLATYGGLDNVRIVTLAPELGHSQEVIRALTALGICVSLGHSVADLGTAEEAVQSGATFITHLFNAMLPFHHRDPGIVGLLTSDRLPAGRHIFYGMIADGIHTNPAALRIAHRAHPKGLVLVTDAVPALGLGNGRHTLGQQEVEVDGLTAYVAGTNTLSGSIAPMDTCVRHFLQATGCSVESALEAASLHPAQLLGLEKRKGTLDFGADADFVVLDDSLHVRATYISGELVWQVEEARP.

An a divalent metal cation-binding site is contributed by Glu-143. Position 154 to 155 (154 to 155 (AH)) interacts with substrate. Residues His-211 and His-232 each contribute to the a divalent metal cation site. Substrate-binding positions include 235 to 236 (NA), Arg-243, and 269 to 272 (DGIH). Catalysis depends on Asp-294, which acts as the Proton donor/acceptor. 328 to 330 (LSG) is a substrate binding site.

The protein belongs to the metallo-dependent hydrolases superfamily. NagA family. A divalent metal cation is required as a cofactor.

It catalyses the reaction N-acetyl-D-glucosamine 6-phosphate + H2O = D-glucosamine 6-phosphate + acetate. Its pathway is amino-sugar metabolism; N-acetylneuraminate degradation. Its function is as follows. Hydrolyzes the N-glycolyl group from N-glycolylglucosamine 6-phosphate (GlcNGc-6-P) in the N-glycolylneuraminic acid (Neu5Gc) degradation pathway. The polypeptide is N-acetylglucosamine-6-phosphate deacetylase (AMDHD2) (Bos taurus (Bovine)).